A 235-amino-acid polypeptide reads, in one-letter code: Elongation factor Tu, chloroplastic (235 aa).

Positions 1-125 (KNMITGAAQM…SVDSYIPTPI (125 aa)) constitute a tr-type G domain. 47-50 (NKED) serves as a coordination point for GTP.

Belongs to the TRAFAC class translation factor GTPase superfamily. Classic translation factor GTPase family. EF-Tu/EF-1A subfamily.

The protein localises to the plastid. Its subcellular location is the chloroplast. The catalysed reaction is GTP + H2O = GDP + phosphate + H(+). Functionally, GTP hydrolase that promotes the GTP-dependent binding of aminoacyl-tRNA to the A-site of ribosomes during protein biosynthesis. The protein is Elongation factor Tu, chloroplastic (tufA) of Costaria costata (Five-ribbed kelp).